The sequence spans 438 residues: 2-(3-amino-3-carboxypropyl)histidine synthase subunit 1 (438 aa).

Positions 1–24 (MAALVVSETAEPGSRVGPGRGRIS) are disordered. [4Fe-4S] cluster contacts are provided by Cys110, Cys214, and Cys342. The tract at residues 402 to 438 (LCQPASDKVQQGSRGGSPAPACESCNCADQKATSPAP) is disordered. A Phosphoserine modification is found at Ser418.

This sequence belongs to the DPH1/DPH2 family. DPH1 subfamily. Component of the 2-(3-amino-3-carboxypropyl)histidine synthase complex composed of DPH1, DPH2, DPH3 and a NADH-dependent reductase. Interacts with DPH2. Interacts with RBM8A. [4Fe-4S] cluster serves as cofactor. Strongly expressed in kidney and liver. Moderately expressed in brain, skin and testis. Weakly expressed in heart, lung, small intestine, spleen, stomach and thymus.

The protein localises to the nucleus. Its subcellular location is the cytoplasm. The catalysed reaction is L-histidyl-[translation elongation factor 2] + S-adenosyl-L-methionine = 2-[(3S)-amino-3-carboxypropyl]-L-histidyl-[translation elongation factor 2] + S-methyl-5'-thioadenosine + H(+). The protein operates within protein modification; peptidyl-diphthamide biosynthesis. Its function is as follows. Catalyzes the first step of diphthamide biosynthesis, a post-translational modification of histidine which occurs in elongation factor 2. DPH1 and DPH2 transfer a 3-amino-3-carboxypropyl (ACP) group from S-adenosyl-L-methionine (SAM) to a histidine residue, the reaction is assisted by a reduction system comprising DPH3 and a NADH-dependent reductase. Acts as a tumor suppressor. In Mus musculus (Mouse), this protein is 2-(3-amino-3-carboxypropyl)histidine synthase subunit 1.